Here is a 663-residue protein sequence, read N- to C-terminus: RING finger protein 145 (663 aa).

14 consecutive transmembrane segments (helical) span residues Tyr53–Pro73, Leu77–Ser97, Phe123–Thr143, Ile146–Glu166, Ile168–Gly188, Leu205–Trp222, Leu225–Ser245, Tyr275–Cys295, Thr316–Val336, Phe340–Ile360, Ser384–Phe404, Leu410–Ile430, Leu460–Gly480, and Trp482–Ala502. A YLYF motif motif is present at residues Tyr81–Phe84. Cys537 is a catalytic residue. The RING-type; atypical zinc-finger motif lies at Cys537–His575. Positions Leu587–Ala663 are disordered. A compositionally biased stretch (polar residues) spans Gly619 to Asp628.

In terms of assembly, interacts (via YLYF motif) with INSIG1 and INSIG2.

Its subcellular location is the endoplasmic reticulum membrane. It catalyses the reaction S-ubiquitinyl-[E2 ubiquitin-conjugating enzyme]-L-cysteine + [acceptor protein]-L-lysine = [E2 ubiquitin-conjugating enzyme]-L-cysteine + N(6)-ubiquitinyl-[acceptor protein]-L-lysine.. In terms of biological role, E3 ubiquitin ligase that catalyzes the direct transfer of ubiquitin from E2 ubiquitin-conjugating enzyme to a specific substrate. In response to bacterial infection, negatively regulates the phagocyte oxidative burst by controlling the turnover of the NADPH oxidase complex subunits. Promotes monoubiquitination of CYBA and 'Lys-48'-linked polyubiquitination and degradation of CYBB NADPH oxidase catalytic subunits, both essential for the generation of antimicrobial reactive oxygen species. Involved in the maintenance of cholesterol homeostasis. In response to high sterol concentrations ubiquitinates HMGCR, a rate-limiting enzyme in cholesterol biosynthesis, and targets it for degradation. The interaction with INSIG1 is required for this function. In addition, triggers ubiquitination of SCAP, likely inhibiting its transport to the Golgi apparatus and the subsequent processing/maturation of SREBPF2, ultimately down-regulating cholesterol biosynthesis. This is RING finger protein 145 from Mus musculus (Mouse).